Consider the following 523-residue polypeptide: Nondiscriminating glutamyl-tRNA synthetase EARS2, mitochondrial (523 aa).

Residues 1-41 (MAALLRRLLQRERPSAASGRPVGRREANLGTDAGVAVRVRF) constitute a mitochondrion transit peptide. 40–42 (RFA) contributes to the L-glutamate binding site. The short motif at 45-53 (PTGFLHLGG) is the 'HIGH' region element. Histidine 50 is a binding site for ATP. L-glutamate contacts are provided by residues glutamate 76, 228 to 232 (YHLAC), and arginine 246. Glutamate 249 contacts ATP. Lysine 256 is subject to N6-succinyllysine. Residue 284 to 288 (KLSKR) coordinates ATP. The 'KMSKS' region signature appears at 284–288 (KLSKR). Lysine 486 is modified (N6-acetyllysine).

The protein belongs to the class-I aminoacyl-tRNA synthetase family. Glutamate--tRNA ligase type 1 subfamily.

The protein localises to the mitochondrion matrix. The catalysed reaction is tRNA(Glx) + L-glutamate + ATP = L-glutamyl-tRNA(Glx) + AMP + diphosphate. The enzyme catalyses tRNA(Glu) + L-glutamate + ATP = L-glutamyl-tRNA(Glu) + AMP + diphosphate. It catalyses the reaction tRNA(Gln) + L-glutamate + ATP = L-glutamyl-tRNA(Gln) + AMP + diphosphate. Its function is as follows. Non-discriminating glutamyl-tRNA synthetase that catalyzes aminoacylation of both mitochondrial tRNA(Glu) and tRNA(Gln) and participates in RNA aminoacylation for mitochondrial protein translation. Attachs glutamate to tRNA(Glu) or tRNA(Gln) in a two-step reaction: glutamate is first activated by ATP to form Glu-AMP and then transferred to the acceptor end of tRNA(Glu) or tRNA(Gln). In vitro, cytoplasmic tRNA(Gln) is slightly glutamylated, but with low activity. The sequence is that of Nondiscriminating glutamyl-tRNA synthetase EARS2, mitochondrial from Homo sapiens (Human).